We begin with the raw amino-acid sequence, 497 residues long: CRISPR-associated endodeoxyribonuclease Cas12f1 (497 aa).

Residues 29–122 (RKDLSTMSRF…PTYKITTAPI (94 aa)) are recognition domain (REC). The interval 123 to 214 (RLQNNIYKLI…YCIIPYTFPT (92 aa)) is wedge domain (WED). A linker region spans residues 215–223 (HETVLDPDK). Residues 224–374 (VMGVDLGVAK…VAINPQYTSQ (151 aa)) are ruvC-I. Residues Asp-228 and Glu-327 contribute to the active site. The interval 375–432 (RCSMCGYIEKTNRSSQAVFECKQCGYGSRTICINCRHVQVSGDVCEECGGIVKKENVN) is target nucleic acid-binding (TNB). Positions 376, 379, 395, and 398 each coordinate Zn(2+). The segment at 433–453 (ADYNAAKNISTPYIDQIIMEK) is ruvC-II. Asp-434 is a catalytic residue.

This sequence belongs to the CRISPR-associated endonuclease Cas12f family. An asymmetric homodimer. Guide RNA is probably required for dimerization. It depends on Mg(2+) as a cofactor. Requires Zn(2+) as cofactor.

Its function is as follows. CRISPR (clustered regularly interspaced short palindromic repeat), is an adaptive immune system that provides protection against mobile genetic elements (viruses, transposable elements and conjugative plasmids). CRISPR clusters contain sequences complementary to antecedent mobile elements and target invading nucleic acids. CRISPR clusters are transcribed and processed into CRISPR RNA (crRNA), which requires a trans-encoded small RNA (tracrRNA), but not this protein. Recognizes a short motif in the CRISPR repeat sequences (the 5' PAM or protospacer adjacent motif, TTC in this organism) to help distinguish self versus nonself, as targets within the CRISPR locus do not have PAMs. Has dsDNA endonuclease activity upon expression in E.coli of this protein, a mini CRISPR array and the probable tracrRNA. Plasmid cleavage is centered around positions 24 base pairs 3' of PAM. The mini system protects E.coli against transformation by foreign plasmids. In Syntrophomonas palmitatica (strain DSM 18709 / JCM 14374 / NBRC 102128 / MPA), this protein is CRISPR-associated endodeoxyribonuclease Cas12f1.